Consider the following 152-residue polypeptide: Superoxide dismutase [Cu-Zn] 2 (152 aa).

Residues histidine 45, histidine 47, and histidine 62 each contribute to the Cu cation site. Cysteine 56 and cysteine 145 are oxidised to a cystine. Zn(2+) is bound by residues histidine 62, histidine 70, histidine 79, and aspartate 82. Residue histidine 119 participates in Cu cation binding.

The protein belongs to the Cu-Zn superoxide dismutase family. Homodimer. The cofactor is Cu cation. It depends on Zn(2+) as a cofactor.

The protein resides in the cytoplasm. The catalysed reaction is 2 superoxide + 2 H(+) = H2O2 + O2. Functionally, destroys radicals which are normally produced within the cells and which are toxic to biological systems. This is Superoxide dismutase [Cu-Zn] 2 (SODCC.5) from Solanum lycopersicum (Tomato).